The sequence spans 635 residues: Cytoplasmic polyadenylation element-binding protein 4 (635 aa).

Disordered stretches follow at residues 1–70 (MQDD…TLRL), 149–284 (GFGG…GFNT), and 337–369 (LFPMEDERSYGEDERSDQSLSGLGSPHSFPHQN). Residues 14 to 30 (PQLQQESQEGQDKQTLS) show a composition bias toward polar residues. A compositionally biased stretch (basic residues) spans 166–182 (PSPHPHFQHPHNQHRRS). Positions 216 to 231 (GSYQSPSSTPSSTSWS) are enriched in low complexity. Residues 232–241 (PGGGYGGWGS) show a composition bias toward gly residues. Positions 254 to 283 (PLNSISPLKKSFPNNQTQTQKYPRNNSGFN) are enriched in polar residues. Residues 341–353 (EDERSYGEDERSD) show a composition bias toward basic and acidic residues. 2 consecutive RRM domains span residues 378–469 (RKVF…PWNL) and 486–568 (KTIF…PYVL).

This sequence belongs to the RRM CPEB family.

The protein localises to the cytoplasm. Its subcellular location is the cell projection. It localises to the dendrite. It is found in the dendritic spine. The protein resides in the postsynaptic density. The protein localises to the axon. Its subcellular location is the growth cone. It localises to the endoplasmic reticulum. It is found in the perinuclear region. Its function is as follows. Sequence-specific RNA-binding protein that binds to the cytoplasmic polyadenylation element (CPE), an uridine-rich sequence element (consensus sequence 5'-UUUUUAU-3') within the mRNA 3'-UTR. RNA binding results in a clear conformational change analogous to the Venus fly trap mechanism. This chain is Cytoplasmic polyadenylation element-binding protein 4 (cpeb4), found in Danio rerio (Zebrafish).